We begin with the raw amino-acid sequence, 86 residues long: Polcalcin Che a 3 (86 aa).

2 consecutive EF-hand domains span residues 8–43 and 43–78; these read QDIA…LGSV and VTPD…NRGL. Aspartate 21, asparagine 23, aspartate 25, lysine 27, glutamate 32, aspartate 56, aspartate 58, aspartate 60, and glutamate 67 together coordinate Ca(2+).

This chain is Polcalcin Che a 3, found in Chenopodium album (Fat hen).